Consider the following 142-residue polypeptide: Prefoldin subunit alpha (142 aa).

It belongs to the prefoldin subunit alpha family. As to quaternary structure, heterohexamer of two alpha and four beta subunits.

It localises to the cytoplasm. Its function is as follows. Molecular chaperone capable of stabilizing a range of proteins. Seems to fulfill an ATP-independent, HSP70-like function in archaeal de novo protein folding. The protein is Prefoldin subunit alpha of Methanosarcina acetivorans (strain ATCC 35395 / DSM 2834 / JCM 12185 / C2A).